The primary structure comprises 1205 residues: U2 snRNP component prp10 (1205 aa).

3 disordered regions span residues 39-58 (QKEA…EGTQ), 122-175 (YADE…GRSY), and 202-254 (GTLK…RRSR). Positions 44 to 58 (KNSSTNGSVNIEGTQ) are enriched in polar residues. Over residues 130 to 153 (MQERQSKKQIQDRESDYQKQRYDR) the composition is skewed to basic and acidic residues. HEAT repeat units follow at residues 393 to 429 (LRER…DFGA), 431 to 473 (ALFN…PFTH), 475 to 505 (ILVV…AKAS), 506 to 540 (GLAH…ASAL), 541 to 578 (GVPA…LLGC), 582 to 619 (PHLK…AATP), 665 to 702 (HFTR…TDGV), 745 to 782 (VGSR…SLGV), 828 to 865 (PYLP…VLKA), 912 to 949 (PPIR…RGSE), 954 to 991 (REWM…AIGP), 993 to 1024 (DVLA…AETC), 1025 to 1061 (MPFT…YIGE), 1065 to 1102 (DYVY…GCVG), 1107 to 1142 (DAMI…RNCI), and 1143 to 1179 (GVGP…QSAD).

The protein belongs to the SF3B1 family. Belongs to the 40S cdc5-associated complex (or cwf complex), a spliceosome sub-complex reminiscent of a late-stage spliceosome composed of the U2, U5 and U6 snRNAs and at least brr2, cdc5, cwf2/prp3, cwf3/syf1, cwf4/syf3, cwf5/ecm2, spp42/cwf6, cwf7/spf27, cwf8, cwf9, cwf10, cwf11, cwf12, prp45/cwf13, cwf14, cwf15, cwf16, cwf17, cwf18, cwf19, cwf20, cwf21, cwf22, cwf23, cwf24, cwf25, cwf26, cyp7/cwf27, cwf28, cwf29/ist3, lea1, msl1, prp5/cwf1, prp10, prp12/sap130, prp17, prp22, sap61, sap62, sap114, sap145, slu7, smb1, smd1, smd3, smf1, smg1 and syf2.

It localises to the nucleus. Contacts pre-mRNA on both sides of the branch site early in spliceosome assembly. The sequence is that of U2 snRNP component prp10 (prp10) from Schizosaccharomyces pombe (strain 972 / ATCC 24843) (Fission yeast).